A 411-amino-acid polypeptide reads, in one-letter code: Serine hydroxymethyltransferase (411 aa).

Position 120-122 (120-122 (GHL)) interacts with (6S)-5,6,7,8-tetrahydrofolate. At lysine 225 the chain carries N6-(pyridoxal phosphate)lysine. 350-352 (SPF) contacts (6S)-5,6,7,8-tetrahydrofolate.

It belongs to the SHMT family. Homodimer. Requires pyridoxal 5'-phosphate as cofactor.

It localises to the cytoplasm. It catalyses the reaction (6R)-5,10-methylene-5,6,7,8-tetrahydrofolate + glycine + H2O = (6S)-5,6,7,8-tetrahydrofolate + L-serine. Its pathway is one-carbon metabolism; tetrahydrofolate interconversion. It participates in amino-acid biosynthesis; glycine biosynthesis; glycine from L-serine: step 1/1. Its function is as follows. Catalyzes the reversible interconversion of serine and glycine with tetrahydrofolate (THF) serving as the one-carbon carrier. This reaction serves as the major source of one-carbon groups required for the biosynthesis of purines, thymidylate, methionine, and other important biomolecules. Also exhibits THF-independent aldolase activity toward beta-hydroxyamino acids, producing glycine and aldehydes, via a retro-aldol mechanism. The chain is Serine hydroxymethyltransferase from Lactobacillus johnsonii (strain CNCM I-12250 / La1 / NCC 533).